Consider the following 115-residue polypeptide: U3-lycotoxin-Ls1k (115 aa).

An N-terminal signal peptide occupies residues 1–20; that stretch reads MKFELLFGVLLVTLFSYSSA. A propeptide spanning residues 21-44 is cleaved from the precursor; the sequence is EMLDDFDQADEDELLSLIEKEEAR. Cystine bridges form between C48–C63, C55–C72, C62–C87, and C74–C85.

The protein belongs to the neurotoxin 19 (CSTX) family. 01 subfamily. Expressed by the venom gland.

Its subcellular location is the secreted. The protein is U3-lycotoxin-Ls1k of Lycosa singoriensis (Wolf spider).